Here is a 418-residue protein sequence, read N- to C-terminus: Gamma-glutamyl phosphate reductase (418 aa).

It belongs to the gamma-glutamyl phosphate reductase family.

The protein resides in the cytoplasm. The enzyme catalyses L-glutamate 5-semialdehyde + phosphate + NADP(+) = L-glutamyl 5-phosphate + NADPH + H(+). The protein operates within amino-acid biosynthesis; L-proline biosynthesis; L-glutamate 5-semialdehyde from L-glutamate: step 2/2. Functionally, catalyzes the NADPH-dependent reduction of L-glutamate 5-phosphate into L-glutamate 5-semialdehyde and phosphate. The product spontaneously undergoes cyclization to form 1-pyrroline-5-carboxylate. This chain is Gamma-glutamyl phosphate reductase, found in Teredinibacter turnerae (strain ATCC 39867 / T7901).